The chain runs to 295 residues: UDP-N-acetylenolpyruvoylglucosamine reductase (295 aa).

Residues 24–188 form the FAD-binding PCMH-type domain; the sequence is KVGGNAEIFF…LKAVFKVNKG (165 aa). Arg168 is a catalytic residue. Ser217 functions as the Proton donor in the catalytic mechanism. The active site involves Glu287.

The protein belongs to the MurB family. It depends on FAD as a cofactor.

The protein localises to the cytoplasm. The catalysed reaction is UDP-N-acetyl-alpha-D-muramate + NADP(+) = UDP-N-acetyl-3-O-(1-carboxyvinyl)-alpha-D-glucosamine + NADPH + H(+). The protein operates within cell wall biogenesis; peptidoglycan biosynthesis. Its function is as follows. Cell wall formation. This Rickettsia felis (strain ATCC VR-1525 / URRWXCal2) (Rickettsia azadi) protein is UDP-N-acetylenolpyruvoylglucosamine reductase.